A 499-amino-acid polypeptide reads, in one-letter code: C2H2-type transcription factor RPN4 (499 aa).

The disordered stretch occupies residues 329-397; sequence QTTKKDNSKP…TTKSTHTHSK (69 aa). The segment covering 331 to 344 has biased composition (basic and acidic residues); the sequence is TKKDNSKPVEKTVV. A compositionally biased stretch (polar residues) spans 345 to 363; sequence EKTSSVTKAGSNHSRSTLA. Residues 405-436 form a C2H2-type zinc finger; sequence FVCELVNSVTNEVCGAQFSRTYDLTRHQNTIH.

Its subcellular location is the nucleus. Functionally, transcription factor that acts as a transcriptional activator of a number of genes encoding proteasomal subunits. Plays a role in ergosterol and plasma membrane homeostasis, and subsequent azole resistance. Regulates the expression of 212 genes, activating 80 genes and repressing, likely in an indirect fashion, 132 genes. Targets comprise several proteasome and ergosterol biosynthesis genes, including ERG1, ERG2, ERG3, and ERG11. Directly regulates ERG11 expression through the 3'-TTGCAAA-5' binding motif. This is C2H2-type transcription factor RPN4 from Candida glabrata (strain ATCC 2001 / BCRC 20586 / JCM 3761 / NBRC 0622 / NRRL Y-65 / CBS 138) (Yeast).